A 449-amino-acid chain; its full sequence is MLDAPEQDPVDPGDPASPPHGEAEQPLPGPRWPRALRASATRRALLLTALGGLLIAGLVTAIPAVGRAPERLAGYIASNPVPSTGAKINASFNRVASGDCLMWPDGTPESAAIVSCADEHRFEVAESIDMRTFPGMEYGQNAAPPSPARIQQISEEQCEAAVRRYLGTKFDPNSKFTISMLWPGDRAWRQAGERRMLCGLQSPGPNNQQLAFKGKVADIDQSKVWPAGTCLGIDATTNQPIDVPVDCAAPHAMEVSGTVNLAERFPDALPSEPEQDGFIKDACTRMTDAYLAPLKLRTTTLTLIYPTLTLPSWSAGSRVVACSIGATLGNGGWATLVNSAKGALLINGQPPVPPPDIPEERLNLPPIPLQLPTPRPAPPAQQLPSTPPGTQHLPAQQPVVTPTRPPESHAPASAAPAETQPPPPDAGAPPATQSPEATPPGPAEPAPAG.

The span at 1–11 (MLDAPEQDPVD) shows a compositional bias: acidic residues. A disordered region spans residues 1–33 (MLDAPEQDPVDPGDPASPPHGEAEQPLPGPRWP). Residues 45-65 (LLLTALGGLLIAGLVTAIPAV) form a helical membrane-spanning segment. Residues 349–449 (QPPVPPPDIP…PGPAEPAPAG (101 aa)) form a disordered region. Pro residues predominate over residues 365 to 387 (PPIPLQLPTPRPAPPAQQLPSTP). A compositionally biased stretch (low complexity) spans 409–418 (HAPASAAPAE). The segment covering 437 to 449 (ATPPGPAEPAPAG) has biased composition (pro residues).

Its subcellular location is the cell membrane. The protein localises to the secreted. May play a role in septum formation. This is an uncharacterized protein from Mycobacterium tuberculosis (strain CDC 1551 / Oshkosh).